Here is a 194-residue protein sequence, read N- to C-terminus: MAIVSPNFCAPYPIELGIVRKVMTLTDGNFAVTDVNGNLLFKVKEPLFSISDKRILLDAYDTPILTLRENKVSLHDRWLVYRGKSTDQSDLLYTLKRSSMIQIMKPKLDIFLAHNKEMKICDFHVKGSWIDRSCVVYAGKSDAIVAQMHKKHTAQSILIGKSNFSVTVYPNVDFAFIVSLIVILDDINREDSED.

This sequence belongs to the LOR family.

Its function is as follows. Might be related to the phospholipid scramblase and tubby-like superfamily of membrane tethered transcription factors. The protein is Protein LURP-one-related 10 of Arabidopsis thaliana (Mouse-ear cress).